A 271-amino-acid chain; its full sequence is Tryptophan synthase alpha chain (271 aa).

Residues E56 and D67 each act as proton acceptor in the active site.

Belongs to the TrpA family. As to quaternary structure, tetramer of two alpha and two beta chains.

The catalysed reaction is (1S,2R)-1-C-(indol-3-yl)glycerol 3-phosphate + L-serine = D-glyceraldehyde 3-phosphate + L-tryptophan + H2O. The protein operates within amino-acid biosynthesis; L-tryptophan biosynthesis; L-tryptophan from chorismate: step 5/5. The alpha subunit is responsible for the aldol cleavage of indoleglycerol phosphate to indole and glyceraldehyde 3-phosphate. The polypeptide is Tryptophan synthase alpha chain (Mycobacterium avium (strain 104)).